The primary structure comprises 565 residues: Sodium/hydrogen exchanger 9B1 (565 aa).

Basic and acidic residues-rich tracts occupy residues 1–14 (MSEH…KDDG) and 23–86 (MSKD…ETQT). The segment at 1–112 (MSEHDVESNK…RGTNSYCPPQ (112 aa)) is disordered. The next 13 membrane-spanning stretches (helical) occupy residues 122–142 (GAAL…EVLP), 146–166 (LFGL…LEFI), 167–187 (KIPV…GFTI), 206–223 (ALRN…GLGL), 238–258 (LSFG…HFIM), 266–286 (FLLG…NMLM), 311–331 (IVAI…GSVI), 341–361 (VLIG…FPSG), 371–391 (AFLV…IGLH), 419–439 (IVAN…GTEV), 449–469 (IGMC…STFV), 482–502 (VFIA…GPLA), and 523–543 (VAFL…GILG).

This sequence belongs to the monovalent cation:proton antiporter 1 (CPA1) transporter (TC 2.A.36) family. As to expression, testis-specific. Expressed in the spermatids and spermatozoa (at protein level). Specifically present in the principal piece of sperm tail (at protein level).

It localises to the cell projection. The protein resides in the cilium. Its subcellular location is the flagellum membrane. Its function is as follows. Sperm-specific Na(+)/H(+) exchanger involved in intracellular pH regulation of spermatozoa. Involved in sperm motility and fertility. In Mus musculus (Mouse), this protein is Sodium/hydrogen exchanger 9B1.